The sequence spans 450 residues: Phosphoglucosamine mutase (450 aa).

Catalysis depends on S102, which acts as the Phosphoserine intermediate. 4 residues coordinate Mg(2+): S102, D243, D245, and D247. S102 bears the Phosphoserine mark.

The protein belongs to the phosphohexose mutase family. Mg(2+) serves as cofactor. In terms of processing, activated by phosphorylation.

It catalyses the reaction alpha-D-glucosamine 1-phosphate = D-glucosamine 6-phosphate. In terms of biological role, catalyzes the conversion of glucosamine-6-phosphate to glucosamine-1-phosphate. In Rhizobium leguminosarum bv. trifolii (strain WSM2304), this protein is Phosphoglucosamine mutase.